Reading from the N-terminus, the 203-residue chain is Octanoyltransferase (203 aa).

Residues 32-203 (ISTPDEIWLV…LMHKIREIFS (172 aa)) form the BPL/LPL catalytic domain. Substrate-binding positions include 71–78 (RGGKITYH), 138–140 (SLG), and 151–153 (GMA). C169 functions as the Acyl-thioester intermediate in the catalytic mechanism.

This sequence belongs to the LipB family.

The protein resides in the cytoplasm. It catalyses the reaction octanoyl-[ACP] + L-lysyl-[protein] = N(6)-octanoyl-L-lysyl-[protein] + holo-[ACP] + H(+). It participates in protein modification; protein lipoylation via endogenous pathway; protein N(6)-(lipoyl)lysine from octanoyl-[acyl-carrier-protein]: step 1/2. Its function is as follows. Catalyzes the transfer of endogenously produced octanoic acid from octanoyl-acyl-carrier-protein onto the lipoyl domains of lipoate-dependent enzymes. Lipoyl-ACP can also act as a substrate although octanoyl-ACP is likely to be the physiological substrate. This Buchnera aphidicola subsp. Baizongia pistaciae (strain Bp) protein is Octanoyltransferase.